The following is a 252-amino-acid chain: Imidazole glycerol phosphate synthase subunit HisF (252 aa).

Active-site residues include aspartate 11 and aspartate 130.

This sequence belongs to the HisA/HisF family. Heterodimer of HisH and HisF.

It is found in the cytoplasm. The enzyme catalyses 5-[(5-phospho-1-deoxy-D-ribulos-1-ylimino)methylamino]-1-(5-phospho-beta-D-ribosyl)imidazole-4-carboxamide + L-glutamine = D-erythro-1-(imidazol-4-yl)glycerol 3-phosphate + 5-amino-1-(5-phospho-beta-D-ribosyl)imidazole-4-carboxamide + L-glutamate + H(+). Its pathway is amino-acid biosynthesis; L-histidine biosynthesis; L-histidine from 5-phospho-alpha-D-ribose 1-diphosphate: step 5/9. Its function is as follows. IGPS catalyzes the conversion of PRFAR and glutamine to IGP, AICAR and glutamate. The HisF subunit catalyzes the cyclization activity that produces IGP and AICAR from PRFAR using the ammonia provided by the HisH subunit. The sequence is that of Imidazole glycerol phosphate synthase subunit HisF from Azobacteroides pseudotrichonymphae genomovar. CFP2.